A 210-amino-acid chain; its full sequence is NADH dehydrogenase [ubiquinone] iron-sulfur protein 8, mitochondrial (210 aa).

The transit peptide at 1–34 directs the protein to the mitochondrion; sequence MRCLTTPMLLRALAQAARAGPPCGRSLHSSAVAA. 4Fe-4S ferredoxin-type domains lie at 102–131 and 141–170; these read RRYPSGEERCIACKLCEAICPAQAITIEAE and TRYDIDMTKCIYCGFCQEACPVDAIVEGPN. The [4Fe-4S] cluster site is built by cysteine 111, cysteine 114, cysteine 117, cysteine 121, cysteine 150, cysteine 153, cysteine 156, and cysteine 160.

The protein belongs to the complex I 23 kDa subunit family. As to quaternary structure, core subunit of respiratory chain NADH dehydrogenase (Complex I) which is composed of 45 different subunits. This is a component of the iron-sulfur (IP) fragment of the enzyme. Interacts with RAB5IF. Requires [4Fe-4S] cluster as cofactor.

It is found in the mitochondrion inner membrane. It carries out the reaction a ubiquinone + NADH + 5 H(+)(in) = a ubiquinol + NAD(+) + 4 H(+)(out). Its function is as follows. Core subunit of the mitochondrial membrane respiratory chain NADH dehydrogenase (Complex I) which catalyzes electron transfer from NADH through the respiratory chain, using ubiquinone as an electron acceptor. Essential for the catalytic activity and assembly of complex I. The chain is NADH dehydrogenase [ubiquinone] iron-sulfur protein 8, mitochondrial (NDUFS8) from Pongo abelii (Sumatran orangutan).